The sequence spans 165 residues: UPF0303 protein Bcep1808_1522 (165 aa).

This sequence belongs to the UPF0303 family.

The polypeptide is UPF0303 protein Bcep1808_1522 (Burkholderia vietnamiensis (strain G4 / LMG 22486) (Burkholderia cepacia (strain R1808))).